A 267-amino-acid polypeptide reads, in one-letter code: NAD kinase (267 aa).

The Proton acceptor role is filled by Asp-45. NAD(+) contacts are provided by residues 45 to 46, 123 to 124, Arg-149, Asp-151, Ala-186, and Asn-226; these read DG and NE.

This sequence belongs to the NAD kinase family. Requires a divalent metal cation as cofactor.

The protein localises to the cytoplasm. It catalyses the reaction NAD(+) + ATP = ADP + NADP(+) + H(+). Functionally, involved in the regulation of the intracellular balance of NAD and NADP, and is a key enzyme in the biosynthesis of NADP. Catalyzes specifically the phosphorylation on 2'-hydroxyl of the adenosine moiety of NAD to yield NADP. The protein is NAD kinase of Shouchella clausii (strain KSM-K16) (Alkalihalobacillus clausii).